We begin with the raw amino-acid sequence, 230 residues long: Poxin (230 aa).

Histidine 43 serves as the catalytic Proton donor. Tyrosine 174 acts as the Shared with catalytic histidine of dimeric partner in catalysis. Lysine 178 functions as the Proton acceptor; shared with catalytic histidine of dimeric partner in the catalytic mechanism.

This sequence belongs to the poxin family. As to quaternary structure, homodimer.

The enzyme catalyses 2',3'-cGAMP + H2O = Gp(2'-5')Ap(3') + H(+). In terms of biological role, nuclease that cleaves host 2',3'-cGAMP. This Orgyia pseudotsugata multicapsid polyhedrosis virus (OpMNPV) protein is Poxin (P26).